The sequence spans 299 residues: ATP phosphoribosyltransferase (299 aa).

It belongs to the ATP phosphoribosyltransferase family. Long subfamily. Equilibrium between an active dimeric form, an inactive hexameric form and higher aggregates. Interconversion between the various forms is largely reversible and is influenced by the natural substrates and inhibitors of the enzyme. The cofactor is Mg(2+).

It localises to the cytoplasm. The catalysed reaction is 1-(5-phospho-beta-D-ribosyl)-ATP + diphosphate = 5-phospho-alpha-D-ribose 1-diphosphate + ATP. The protein operates within amino-acid biosynthesis; L-histidine biosynthesis; L-histidine from 5-phospho-alpha-D-ribose 1-diphosphate: step 1/9. Feedback inhibited by histidine. In terms of biological role, catalyzes the condensation of ATP and 5-phosphoribose 1-diphosphate to form N'-(5'-phosphoribosyl)-ATP (PR-ATP). Has a crucial role in the pathway because the rate of histidine biosynthesis seems to be controlled primarily by regulation of HisG enzymatic activity. This Salmonella agona (strain SL483) protein is ATP phosphoribosyltransferase.